The primary structure comprises 129 residues: M-zodatoxin-Lt8f (129 aa).

A signal peptide spans 1–20; it reads MKYFVVALALVAAFACIAES. The propeptide occupies 21–60; the sequence is KPAESEHELAEVEEENELADLEDAVWLEHLADLSDLEEAR. The short motif at 57–60 is the Processing quadruplet motif element; it reads EEAR.

Post-translationally, cleavage of the propeptide depends on the processing quadruplet motif (XXXR, with at least one of X being E). Expressed by the venom gland.

The protein resides in the secreted. Its function is as follows. Insecticidal, cytolytic and antimicrobial peptide. Has insecticidal activity against the flesh fly S.carnaria. Has antibacterial activity against the Gram-negative bacteria E.coli. Forms voltage-dependent, ion-permeable channels in membranes. At high concentration causes cell membrane lysis. The chain is M-zodatoxin-Lt8f (cit 1-7) from Lachesana tarabaevi (Spider).